The sequence spans 28 residues: Chassatide C11 (28 aa).

Disulfide bonds link Cys-3-Cys-19, Cys-7-Cys-21, and Cys-12-Cys-26. At Met-16 the chain carries Methionine sulfoxide; in form chassatide chaC11A.

The protein belongs to the cyclotide family. Bracelet subfamily. As to expression, expressed in fruit, pedicel and stem but not in leaf and root (at protein level).

Functionally, chassatide C11: Probably participates in a plant defense mechanism. Active against E.coli ATCC 25922 (MIC=8.5 uM) but not against S.aureus ATCC 12600 or S.epidermidis ATCC 14990. Has cytotoxic and hemolytic activity. Its function is as follows. Chassatide C11A: Probably participates in a plant defense mechanism. Has no activity against bacteria up to a concentration of 80 uM. Has no cytotoxic and no hemolytic activity. The polypeptide is Chassatide C11 (Chassalia chartacea (Chassalia curviflora)).